Consider the following 300-residue polypeptide: uncharacterized protein (300 aa).

A run of 8 helical transmembrane segments spans residues 13–35, 45–67, 80–102, 106–128, 180–202, 217–236, 243–265, and 275–294; these read LLCIFSQCLFGILYLFSIWLQPL, MLTMIFGLLLILFPTIGCRSLLS, WVLFLLGTLDAGSQFWLFMWAPL, GINIAMGYFLFPLIMAVLGWAWL, IPALQGITLDIILISIPCFIYIL, YWLLLPALGIVSAISLSANL, PVSIFAVLSYIEPILLFLIAVFV, and YFTYVPIWLSLIVIGIEGLL.

The protein belongs to the EamA transporter family.

It localises to the cell membrane. This is an uncharacterized protein from Haemophilus influenzae (strain ATCC 51907 / DSM 11121 / KW20 / Rd).